We begin with the raw amino-acid sequence, 101 residues long: Large ribosomal subunit protein eL30 (101 aa).

Belongs to the eukaryotic ribosomal protein eL30 family.

The protein is Large ribosomal subunit protein eL30 (rpl30e) of Thermococcus celer.